The sequence spans 376 residues: MFQLSVQDIHPGEKAGDKEEAIRQVAAALVQAGNVAEGYVNGMLAREQQTSTFLGNGIAIPHGTTDTRDQVLKTGVQVFQFPEGVTWGDGQVAYVAIGIAASSDEHLGLLRQLTHVLSDDSVAEQLKSATTAEELRALLMGEKQSEQLKLDNEMLTLDIVASDLLTLQALNAARLKEAGAVDATFVTKAINEQPLNLGQGIWLSDSAEGNLRSAIAVSRAANAFDVDGETAAMLVSVAMNDDQPIAVLKRLADLLLDNKADRLLKADAATLLALLTSDDAPTDDVLSAEFVVRNEHGLHARPGTMLVNTIKQFNSDITVTNLDGTGKPANGRSLMKVVALGVKKGHRLRFTAQGADAEQALKAIGDAIAAGLGEGA.

The region spanning 2–142 (FQLSVQDIHP…EELRALLMGE (141 aa)) is the PTS EIIA type-2 domain. His62 serves as the catalytic Tele-phosphohistidine intermediate; for EIIA activity. His62 carries the phosphohistidine; by HPr modification. The m domain stretch occupies residues 156–284 (TLDIVASDLL…LTSDDAPTDD (129 aa)). An HPr domain is found at 285–375 (VLSAEFVVRN…DAIAAGLGEG (91 aa)). His299 acts as the Pros-phosphohistidine intermediate; for HPr activity in catalysis. His299 carries the phosphohistidine; by EI modification.

The protein localises to the cytoplasm. Functionally, the phosphoenolpyruvate-dependent sugar phosphotransferase system (sugar PTS), a major carbohydrate active transport system, catalyzes the phosphorylation of incoming sugar substrates concomitantly with their translocation across the cell membrane. The enzyme II FruAB PTS system is involved in fructose transport. The sequence is that of Multiphosphoryl transfer protein from Escherichia coli O157:H7.